A 248-amino-acid chain; its full sequence is 14-3-3-like protein 2 (248 aa).

Belongs to the 14-3-3 family. As to quaternary structure, interacts with daf-16. Interacts with sir-2.1. Interacts with hcf-1.

It localises to the cytoplasm. It is found in the nucleus. Required for extension of lifespan by sir-2.1. Required to modulate lifespan, in concert with hcf-1, acting redundantly with 14-3-3-like protein par-5. Promotes nuclear export of yap-1. Negatively regulates the transcriptional activity of daf-16 by sequestering it to the cytoplasm. This is 14-3-3-like protein 2 from Caenorhabditis elegans.